The primary structure comprises 320 residues: ATP-dependent 6-phosphofructokinase (320 aa).

G12 lines the ATP pocket. Position 22-26 (22-26) interacts with ADP; that stretch reads RGVVR. ATP is bound by residues 73–74 and 103–106; these read RF and GDGS. Position 104 (D104) interacts with Mg(2+). 126–128 provides a ligand contact to substrate; sequence TID. The Proton acceptor role is filled by D128. Position 155 (R155) interacts with ADP. Residues R163 and 170 to 172 contribute to the substrate site; that span reads MGR. Residues 186 to 188, K212, and 214 to 216 contribute to the ADP site; these read GCE and KKH. Residues E223, R244, and 250 to 253 each bind substrate; that span reads HIQR.

The protein belongs to the phosphofructokinase type A (PFKA) family. ATP-dependent PFK group I subfamily. Prokaryotic clade 'B1' sub-subfamily. Homotetramer. Requires Mg(2+) as cofactor.

The protein localises to the cytoplasm. The catalysed reaction is beta-D-fructose 6-phosphate + ATP = beta-D-fructose 1,6-bisphosphate + ADP + H(+). Its pathway is carbohydrate degradation; glycolysis; D-glyceraldehyde 3-phosphate and glycerone phosphate from D-glucose: step 3/4. With respect to regulation, allosterically activated by ADP and other diphosphonucleosides, and allosterically inhibited by phosphoenolpyruvate. In terms of biological role, catalyzes the phosphorylation of D-fructose 6-phosphate to fructose 1,6-bisphosphate by ATP, the first committing step of glycolysis. This chain is ATP-dependent 6-phosphofructokinase, found in Vibrio parahaemolyticus serotype O3:K6 (strain RIMD 2210633).